Consider the following 256-residue polypeptide: MIEIIPAIDLLKGSCVRLVQGDYNEVTEFNDNPSQQALLWQTLGAKRLHLVDLDGAKTGEPLNDSAIRKIKEKLSIPIQIGGGIRTIQRAEDLIELGVDRVILGTIAIENPNIIEKLSEKHPNKIVVGIDAKEGKVATRGWTNNCEMDATELVKRFSQTNIAAIICTDISTDGTLMGPNLDFLRELALISTVPLIASGGIGSISDILSILPLEQNGINGLIIGRALYDGAFDLAEALKVVKNQDLQDIVNANKDQA.

Asp9 (proton acceptor) is an active-site residue. Asp130 acts as the Proton donor in catalysis.

It belongs to the HisA/HisF family.

It is found in the cytoplasm. The catalysed reaction is 1-(5-phospho-beta-D-ribosyl)-5-[(5-phospho-beta-D-ribosylamino)methylideneamino]imidazole-4-carboxamide = 5-[(5-phospho-1-deoxy-D-ribulos-1-ylimino)methylamino]-1-(5-phospho-beta-D-ribosyl)imidazole-4-carboxamide. Its pathway is amino-acid biosynthesis; L-histidine biosynthesis; L-histidine from 5-phospho-alpha-D-ribose 1-diphosphate: step 4/9. The polypeptide is 1-(5-phosphoribosyl)-5-[(5-phosphoribosylamino)methylideneamino] imidazole-4-carboxamide isomerase (Prochlorococcus marinus (strain SARG / CCMP1375 / SS120)).